The following is a 231-amino-acid chain: Heptaprenylglyceryl phosphate synthase (231 aa).

Sn-glycerol 1-phosphate is bound at residue K12. Mg(2+) contacts are provided by D14 and T40. Sn-glycerol 1-phosphate contacts are provided by residues 159–164 (YMEYSG), G189, and 209–210 (GN).

It belongs to the GGGP/HepGP synthase family. Group I subfamily. In terms of assembly, homodimer. Requires Mg(2+) as cofactor.

The catalysed reaction is sn-glycerol 1-phosphate + all-trans-heptaprenyl diphosphate = 3-heptaprenyl-sn-glycero-1-phosphate + diphosphate. It participates in membrane lipid metabolism; glycerophospholipid metabolism. Functionally, prenyltransferase that catalyzes in vivo the transfer of the heptaprenyl moiety of heptaprenyl pyrophosphate (HepPP; 35 carbon atoms) to the C3 hydroxyl of sn-glycerol-1-phosphate (G1P), producing heptaprenylglyceryl phosphate (HepGP). This reaction is an ether-bond-formation step in the biosynthesis of archaea-type G1P-based membrane lipids found in Bacillales. The polypeptide is Heptaprenylglyceryl phosphate synthase (Brevibacillus brevis (strain 47 / JCM 6285 / NBRC 100599)).